The primary structure comprises 3140 residues: MSTIVFGSFTCHLDAAIHQDNADRLAKAWTRPENRQVSNVHLLCRRAAKSLINTYESATASAWKGLEEKLQPMFAKREFSKTVTKRKGLRCFKESSEKFIEKKLRKQYQEERERFQFLNGPDAIVNQISVDKCEASVRVPFPHIIEKPSFATPSMKKKVVFTKVRMSEASLQLFMRRVAANAKANGQKVEIIGRKRVVGNYTTKSRLTYFRTHVRHLDGSKPRYDLVLDEATKKILQLFANTSGFHHVHKKGEVTPGMSGFVVNPMNLSDPMQVYDTDLFIVRGKHNSILVDSRCKVSKEQSNEIIHYSDPGKQFWDGFTNSFMQCKLRETDHQCTSDLDVKECGYVAALVCQAIIPCGKITCLQCAQKYSYMSQQEIRDRFSTVIEQHEKTVMDNYPQFSHVLAFLKRYRELMRVENQNYEAFKDITHMIGERKEAPFSHLNKINELIIKGGMMSAQDYIEASDHLRELARYQKNRTENIRSGSIKAFRNKISSKAHVNMQLMCDNQLDTNGNFVWGQREYHAKRFFRNYFDVIDVSEGYRRHIVRENPRGIRKLAIGNLVMSTNLAALRKQLLGEECIHFEVSKECTSKRGENFVYQCCCVTHEDGTPLESEIISPTKNHLVVGNSGDSKYVDLPTAKGGAMFIAKAGYCYINIFLAMLININEDEAKSFTKTVRDTLVPKLGTWPSMMDLATACHFLAILYPETRNAELPRILVDHEAKIFHVVDSFGSLSTGMHVLKANTINQLISFASDTLDSNMKTYLVGGLEVDKCDEFKNVKLLIRSIYKPQIMEQVLKEEPYLLLMSVLSPGVLMALFNSGSLEKATQYWITRSHSLAAITSMLSSLAAKVSLASTLNAQMSVIDEHAAVLCDSVFVGTKPYASYMMAVKTLERMKARTESDHTLNDLGFSVIRQATPHLVEKSYLQELEQAWKELSWSEKFSAILESQRWRKHIPKPFIPKDGADLGGRYDISVRSLLGNQYKRLRDVVRRKRDDVVCYTHQSMGKLFCKAIGISTSFLPSTLKMFDMLIVFSLLLSIGATCNSMINEHKHLKQLAADREDKKRFKRLQVLHTRLSEKVGCTPTADEFLEYVGGENPDLLKHAEDLIGDGQVVVHQSKRDSQANLERVVAFVALVMMLFDSERSDGVYKILNKLKGIMGSVDQAVQHQSLDDIEDILDEKKLTVDFVLQSNEVAPTVPFDSTFEKWWTNQLETGNVIPHYRTEGHFLEFTRENAAHIANEVMHGSHQDILIRGAVGSGKSTGLPFHLSKKGHVLLIEPTRPLAENVCKQLRGQPFNVNPTLRMRGMSTFGSTPITVMTSGYALHFLANNPTYLDNYKCIIFDECHVHDASAMAFRCLLSEYSYPGKILKVSATPPGHEVDFKTQKEVKVIVEESLSFQQFVSNLGTGCNSDILKHGVNVLVYVASYNEVDTLSKLLTDRSFKVSKVDGRTMKIGNVEIPTSGTQAKPHFVVATNIIENGVTLDIDVVVDFGLKVVPVLDIDNRLVRYTKKSISYGERIQRLGRVGRNKPGAALRIGFTEKGLTQIPPIIATEAAFLCFTYGLPVMTNGVSTSLLAMCTVKQARTMQQFELSPFYTVALVRFDGTMHQEIFRLLKSYRLRDSEVILNKLAIPNSNVCGWMSVRDYKRQGCNLDLDENIRVPFYVKDIPETLHERIWQVVETHKSDAGFGRICSSSACKIAYTLQTDIHSIPRTIKIIDALLEQERTKQAHFRAMTSQSCSSSNFSLSSITSAIRSKYAKDHTEENIGVLQTAKSQLLEFKNLNIDPSYPELVRNFGALECVHHQTKEGVSKALQLKGHWNKRLITRDATLMLGVLGGGAWMIFSYLRDSFKEEVVHQGFNRRQRQKLKFRQARDNRMAREVYGDDSTMADYFGSAYSKKGKSKGKTRGMGTKTRKFVNMYGYDPTDYNFVRFVDPLTGHTLDENPLMDINLVQEHFSQIRNDYIGDDKITMQHIMSNPGIVAYYIKDATQKALKVDLTPHNPLRVCDKTATIAGFPEREFELRQTGHPVFVEPNAIPKINEEGDEEVDHESKSLFRGLRDYNPIASSICQLNNSSGARQSVMFGLGFGGLIVTNQHLFKRNDGELTIRSHHGEFVVKDTKTLKLLPCKGRDIVIIRLPKDFPPFPKRLQFRTPTTEDRVCLIGSNFQTKSISSTMSETSATYPVDNSHFWKHWISTKDGHCGLPIVSTRDGSILGLHSLANSTNTQNFYAAFPDNFETTYLSNQDNDNWIKQWRYNPDEVCWGSLQLKRDIPQSPFTICKLLTDLDGEFVYTQSKTTHWLRDRLEGNLKAVGACPGQLVTKHVVKGKCTLFETYLLTHPEEHEFFRPLMGAYQKSALNKDAYVKDLMKYSKPIVVGAVDCDQFERAVDVVISMLISKGFEECNYVTDPDDIFSALNMKAAVGALYSGKKRDYFKNVSDQDKESFVRASCKRLFMGKKGVWNGSLKAELRPKEKVEANKTRSFTAAPIDTLLGGKVCVDDFNNQFYSLNLHCPWSVGMTKFRGGWDKLLRALPEGWIYCDADGSQFDSSLSPYLINAVLNIRLAFMEEWDIGEQMLSNLYTEIVYTPIATPDGTIVKKFKGNNSGQPSTVVDNTLMVILAMTYSLLKLGYHPDTHDCICRYFVNGDDLVLAVHPAYESIYDELQEHFSQLGLNYTFATKTENKEELWFMSHKGVLYDDMYIPKLEPERIVSILEWDRSNEPIHRLEAICASMVEAWGYKELLREIRKFYSWVLEQAPYNALSKDGKAPYIAETALKKLYTDTEASETEIERYLEAFYDDFNDDGESNVVVHQADEREDEEEVDAGKPSVVTAPAATSPILQPPPVIQPAPRTTASMLNPIFTPATTQPATKPVSQVSQPQLQTFGTYGNEDASPSNSNALVNTNRDRDVDAGSVGTFTVPRLKAMTSKLSLPKVKGKAIMNLNHLAHYSPAQVDLSNTRAPQSCFQTWYEGVKRDYDVTDDEMSIILNGLMVWCIENGTSPNINGMWVMMDGETQVEYPIKPLLDHAKPTFRQIMAHFSNVAEAYIEKRNYEKAYMPRYGIQRNLTDYSLARYAFDFYEMTSTTPVRAREAHIQMKAAALRNVQNRLFGLDGNVGTQEEDTERHTAGDVNRNMHNLLGVRGV.

One can recognise a Peptidase S30 domain in the interval R165–Y308. Active-site for P1 proteinase activity residues include H216, D225, and S259. The short motif at K360–C363 is the Involved in interaction with stylet and aphid transmission element. The Involved in virions binding and aphid transmission motif lies at P618–K620. In terms of domain architecture, Peptidase C6 spans M644 to G766. Active-site for helper component proteinase activity residues include C652 and H725. In terms of domain architecture, Helicase ATP-binding spans E1240–E1392. G1253–S1260 is an ATP binding site. The short motif at D1342–H1345 is the DECH box element. The 160-residue stretch at D1411 to S1570 folds into the Helicase C-terminal domain. Positions K1897–K1904 match the Nuclear localization signal motif. Y1919 carries the O-(5'-phospho-RNA)-tyrosine modification. One can recognise a Peptidase C4 domain in the interval S2050–R2268. Residues H2095, D2130, and C2200 each act as for nuclear inclusion protein A activity in the active site. The RdRp catalytic domain maps to W2534–Y2658. Residues T2829 and T2834 are each glycosylated (O-linked (GlcNAc) threonine; by host). Phosphoserine is present on S2835. O-linked (GlcNAc) threonine; by host glycans are attached at residues T2851, T2863, T2864, and T2868. O-linked (GlcNAc) serine; by host glycosylation occurs at S2875. 3 positions are modified to phosphoserine: S2891, S2911, and S2928. T3064 and T3123 each carry phosphothreonine.

The protein belongs to the potyviridae genome polyprotein family. In terms of assembly, interacts with host eIF4E protein (via cap-binding region); this interaction mediates the translation of the VPg-viral RNA conjugates. Part of a complex that comprises VPg, RNA, host EIF4E and EIF4G; this interaction mediates the translation of the VPg-viral RNA conjugates. Post-translationally, VPg is uridylylated by the polymerase and is covalently attached to the 5'-end of the genomic RNA. This uridylylated form acts as a nucleotide-peptide primer for the polymerase. Genome polyprotein of potyviruses undergoes post-translational proteolytic processing by the main proteinase NIa-pro resulting in the production of at least ten individual proteins. The P1 proteinase and the HC-pro cleave only their respective C-termini autocatalytically. 6K1 is essential for proper proteolytic separation of P3 from CI.

The protein resides in the host cytoplasmic vesicle. It localises to the host nucleus. Its subcellular location is the virion. The enzyme catalyses RNA(n) + a ribonucleoside 5'-triphosphate = RNA(n+1) + diphosphate. It carries out the reaction Hydrolyzes glutaminyl bonds, and activity is further restricted by preferences for the amino acids in P6 - P1' that vary with the species of potyvirus, e.g. Glu-Xaa-Xaa-Tyr-Xaa-Gln-|-(Ser or Gly) for the enzyme from tobacco etch virus. The natural substrate is the viral polyprotein, but other proteins and oligopeptides containing the appropriate consensus sequence are also cleaved.. The catalysed reaction is Hydrolyzes a Gly-|-Gly bond at its own C-terminus, commonly in the sequence -Tyr-Xaa-Val-Gly-|-Gly, in the processing of the potyviral polyprotein.. In terms of biological role, required for aphid transmission and also has proteolytic activity. Only cleaves a Gly-Gly dipeptide at its own C-terminus. Interacts with virions and aphid stylets. Acts as a suppressor of RNA-mediated gene silencing, also known as post-transcriptional gene silencing (PTGS), a mechanism of plant viral defense that limits the accumulation of viral RNAs. May have RNA-binding activity. Has helicase activity. It may be involved in replication. Its function is as follows. Indispensable for virus replication. Reduces the abundance of host transcripts related to jasmonic acid biosynthesis therefore altering the host defenses. In order to increase its own stability, decreases host protein degradation pathways. Functionally, indispensable for virus replication. In terms of biological role, mediates the cap-independent, EIF4E-dependent translation of viral genomic RNAs. Binds to the cap-binding site of host EIF4E and thus interferes with the host EIF4E-dependent mRNA export and translation. VPg-RNA directly binds EIF4E and is a template for transcription. Also forms trimeric complexes with EIF4E-EIF4G, which are templates for translation. Has RNA-binding and proteolytic activities. Its function is as follows. An RNA-dependent RNA polymerase that plays an essential role in the virus replication. Functionally, involved in aphid transmission, cell-to-cell and systemis movement, encapsidation of the viral RNA and in the regulation of viral RNA amplification. In Prunus armeniaca (Apricot), this protein is Genome polyprotein.